We begin with the raw amino-acid sequence, 347 residues long: Subtilase cytotoxin subunit A (347 aa).

Positions 1-21 (MLKILWTYILFLLFISASARA) are cleaved as a signal peptide. Residues 24–327 (PWYFDAIGLT…GRVLNAEKAI (304 aa)) enclose the Peptidase S8 domain. Residues D52, H89, and S272 each act as charge relay system in the active site. Cysteines 288 and 331 form a disulfide. Residues 322-347 (NAEKAISMFCKKNYIPVRQGRMSEEL) form an A2 domain region. The Prevents secretion from ER motif lies at 344 to 347 (SEEL).

The protein belongs to the peptidase S8 family. Forms a complex with SubB with the stoichiometry SubA1:SubB5 (called SubAB5).

The protein localises to the secreted. It localises to the host cytoplasm. The protein resides in the host cytosol. It is found in the host endoplasmic reticulum lumen. Functionally, protease subunit of subtilase cytotoxin SubAB5. An endoprotease specific for host endoplasmic reticulum (ER) chaperone BiP/HSPA5, has no activity on human HSP70 or HSPA8. Cleaves between 'Leu-416' and 'Leu-417' of BiP/HSPA5 in the hinge between BiP's ATPase and protein-binding domains. This induces host ER stress response and eventual cell death. Culture supernatant of E.coli expressing both subA and subB are toxic for Vero cells (African green monkey kidney cell line), Chinese hamster ovary cells and Hct-8 cells (human colonic epithelial cell line); the subunits are not toxic individually. Purified SubAB5 is highly toxic, &lt;0.1 pg is able to kill at least 50% of 30'000 Vero cells in a microtiter plate assay after 3 days; no cytotoxicity is seen at 24 hours. Preabsorption with cells expressing a ganglioside GM2 mimic reduced cytotoxicity of SubAB5 by 93% in the Vero cytotoxicity assay. Intraperitoneal injection of 200 ng of purified SubAB5 kills mice; the higher the dose the faster the mice die. Animals injected intraperitoneally with purified SubAB5 have microvascular thrombi in the brain and other organs, including the renal tubules and glomeruli. Injection induces an unfolded response in mice. Mice fed E.coli cells expressing cloned SubAB5 experience drastic weight loss and appear ill and lethargic. Protein synthesis in Vero cells is transiently inhibited by SubAB5; both subunits are required for this effect. Inhibition of protein synthesis is prevented by brefeldin A; cells are arrested in the G1 phase. SubAB5 at 100 ng/ml induced caspase-dependent apoptosis in Vero cells through mitochondrial membrane damage. The chain is Subtilase cytotoxin subunit A from Escherichia coli.